We begin with the raw amino-acid sequence, 396 residues long: Phosphoglycerate kinase (396 aa).

Substrate is bound by residues 21-23 (DLN), R36, 59-62 (HLGR), R113, and R146. ATP is bound by residues K197, E319, and 345-348 (GGDT).

Belongs to the phosphoglycerate kinase family. As to quaternary structure, monomer.

Its subcellular location is the cytoplasm. It carries out the reaction (2R)-3-phosphoglycerate + ATP = (2R)-3-phospho-glyceroyl phosphate + ADP. It functions in the pathway carbohydrate degradation; glycolysis; pyruvate from D-glyceraldehyde 3-phosphate: step 2/5. This is Phosphoglycerate kinase from Legionella pneumophila (strain Corby).